We begin with the raw amino-acid sequence, 86 residues long: Anti-adapter protein IraP (86 aa).

A coiled-coil region spans residues 1–36 (MKNLIAELLLKLAQKEEESKELVAQVEALEIIVTAM).

The protein belongs to the IraP family. In terms of assembly, interacts with RssB.

It localises to the cytoplasm. Inhibits RpoS proteolysis by regulating RssB activity, thereby increasing the stability of the sigma stress factor RpoS especially during phosphate and magnesium starvation, but also in stationary phase and during nitrogen starvation. Its effect on RpoS stability is due to its interaction with RssB, which probably blocks the interaction of RssB with RpoS, and the consequent delivery of the RssB-RpoS complex to the ClpXP protein degradation pathway. This chain is Anti-adapter protein IraP, found in Salmonella choleraesuis (strain SC-B67).